The following is a 261-amino-acid chain: Carbonic anhydrase 1 (261 aa).

Alanine 2 carries the N-acetylalanine modification. Residues 4 to 261 (PDWGYDGENG…LKGRTVKASF (258 aa)) form the Alpha-carbonic anhydrase domain. The disordered stretch occupies residues 22–41 (PIANGNNQSPIDIKTSETKR). Catalysis depends on histidine 65, which acts as the Proton donor/acceptor. Residues histidine 95, histidine 97, and histidine 120 each contribute to the Zn(2+) site. Residues threonine 200 and 200–201 (TH) each bind substrate.

It belongs to the alpha-carbonic anhydrase family. Zn(2+) is required as a cofactor.

It is found in the cytoplasm. The catalysed reaction is hydrogencarbonate + H(+) = CO2 + H2O. It carries out the reaction urea = cyanamide + H2O. Inhibited by acetazolamide. Its function is as follows. Catalyzes the reversible hydration of carbon dioxide. Can hydrate cyanamide to urea. This is Carbonic anhydrase 1 (CA1) from Ovis aries (Sheep).